A 363-amino-acid polypeptide reads, in one-letter code: Probable dual-specificity RNA methyltransferase RlmN (363 aa).

The active-site Proton acceptor is glutamate 106. Residues 112 to 345 form the Radical SAM core domain; the sequence is HEYGNSVCVT…VTIRREQGHD (234 aa). Cysteine 119 and cysteine 350 are joined by a disulfide. 3 residues coordinate [4Fe-4S] cluster: cysteine 126, cysteine 130, and cysteine 133. S-adenosyl-L-methionine-binding positions include 176–177, serine 208, 231–233, and asparagine 307; these read GE and SLH. Cysteine 350 acts as the S-methylcysteine intermediate in catalysis.

The protein belongs to the radical SAM superfamily. RlmN family. [4Fe-4S] cluster serves as cofactor.

The protein localises to the cytoplasm. The catalysed reaction is adenosine(2503) in 23S rRNA + 2 reduced [2Fe-2S]-[ferredoxin] + 2 S-adenosyl-L-methionine = 2-methyladenosine(2503) in 23S rRNA + 5'-deoxyadenosine + L-methionine + 2 oxidized [2Fe-2S]-[ferredoxin] + S-adenosyl-L-homocysteine. It catalyses the reaction adenosine(37) in tRNA + 2 reduced [2Fe-2S]-[ferredoxin] + 2 S-adenosyl-L-methionine = 2-methyladenosine(37) in tRNA + 5'-deoxyadenosine + L-methionine + 2 oxidized [2Fe-2S]-[ferredoxin] + S-adenosyl-L-homocysteine. Specifically methylates position 2 of adenine 2503 in 23S rRNA and position 2 of adenine 37 in tRNAs. The polypeptide is Probable dual-specificity RNA methyltransferase RlmN (Bacillus subtilis (strain 168)).